Here is a 346-residue protein sequence, read N- to C-terminus: Haptoglobin (346 aa).

The signal sequence occupies residues 1–18; the sequence is MRALGAVVTLLLWGQLFA. The region spanning 31–87 is the Sushi domain; sequence DSCPKPPEIENGYVEHLVRYRCQHYRLRTEGDGVYTLNSEKQWVNTAAGERLPECEA. Disulfide bonds link cysteine 52–cysteine 85, cysteine 89–cysteine 206, cysteine 249–cysteine 280, and cysteine 291–cysteine 321. A Peptidase S1 domain is found at 102-344; that stretch reads IIGGSLDAKG…FLDWIQETMA (243 aa). N-linked (GlcNAc...) asparagine glycans are attached at residues asparagine 147 and asparagine 181. Residues 258 to 263 form an interaction with CD163 region; that stretch reads VPEKEG.

Belongs to the peptidase S1 family. Tetramer of two alpha and two beta chains; disulfide-linked. The hemoglobin/haptoglobin complex is composed of a haptoglobin dimer bound to two hemoglobin alpha-beta dimers. Interacts with CD163. Interacts with ERGIC3. As to expression, expressed by the liver and secreted in plasma.

It localises to the secreted. Functionally, as a result of hemolysis, hemoglobin is found to accumulate in the kidney and is secreted in the urine. Haptoglobin captures, and combines with free plasma hemoglobin to allow hepatic recycling of heme iron and to prevent kidney damage. Haptoglobin also acts as an antioxidant, has antibacterial activity and plays a role in modulating many aspects of the acute phase response. Hemoglobin/haptoglobin complexes are rapidly cleared by the macrophage CD163 scavenger receptor expressed on the surface of liver Kupfer cells through an endocytic lysosomal degradation pathway. This Mesocricetus auratus (Golden hamster) protein is Haptoglobin (HP).